The chain runs to 452 residues: Probable hexaprenyl pyrophosphate synthase, mitochondrial (452 aa).

The isopentenyl diphosphate site is built by lysine 108, arginine 111, and histidine 204. The Mg(2+) site is built by aspartate 211 and aspartate 215. Arginine 220 is a binding site for an all-trans-polyprenyl diphosphate. Position 221 (arginine 221) interacts with isopentenyl diphosphate. The an all-trans-polyprenyl diphosphate site is built by lysine 303, threonine 304, glutamine 341, and lysine 358.

Belongs to the FPP/GGPP synthase family. The cofactor is Mg(2+).

The protein resides in the mitochondrion. It participates in cofactor biosynthesis; ubiquinone biosynthesis. Its function is as follows. Assembly of polyisoprenoid side chains. The polyprenyl synthase of coenzyme Q biosynthesis catalyzes the formation from isopentenyl diphosphate of all trans-polyprenyl pyrophosphates generally ranging in length of between 6 and 10 isoprene units depending on the species. In Yarrowia lipolytica (strain CLIB 122 / E 150) (Yeast), this protein is Probable hexaprenyl pyrophosphate synthase, mitochondrial (COQ1).